The sequence spans 449 residues: MEHIQTRTTLSQLSTLPSDKRLGAIRFKCLLVMKVEMINRIAGVFARRGYNIESLAVGLNKDKALFTIVVSGTERVLQQVMEQLQKLVNVIKVEDLSKEPQVERELMLIKISADPKYRAEVMWLVDVFRAKIVDISDQSLTIEVTGDPGKMVAVQRNLSKFGIREIARTGKIALRREKMGESAPFWRFSAASYPDLEGAMSAGTISRTIKRTPNGESMSMAEGDVYPVETDDNSGVSQVLDAHWGVLNDEDTSGLRSHTLSMLVNDTPGVLNIVTGVFARRGYNIQSLAVGHAEVEGLSRITTVVPGTDESVSKLVQQLYKLVDIHEVRDITHLPFAERELMLIKIAVNAAARRNVLDIASIFRAKAVDVSDHTITLELTGDLHKMVRLQRLLEPYGICEVARTDVWHWYVNQVWIRSTCEDIHTLCSLKSSNLRKIPALCGMCANVDD.

The N-terminal 30 residues, 1-30, are a transit peptide targeting the chloroplast; it reads MEHIQTRTTLSQLSTLPSDKRLGAIRFKCL. 2 consecutive ACT domains span residues 31–98 and 259–333; these read LVMK…DLSK and TLSM…DITH.

This sequence belongs to the acetolactate synthase small subunit family. The acetolactate synthase complex contains both large catalytic subunits and small regulatory subunits.

It is found in the plastid. The protein resides in the chloroplast. The protein operates within amino-acid biosynthesis; L-isoleucine biosynthesis; L-isoleucine from 2-oxobutanoate: step 1/4. Its pathway is amino-acid biosynthesis; L-valine biosynthesis; L-valine from pyruvate: step 1/4. Regulatory subunit of acetohydroxy-acid synthase. Probably involved in feedback inhibition by branched-chain amino acids. Not involved in herbicide tolerance. The polypeptide is Acetolactate synthase small subunit 1, chloroplastic (Nicotiana plumbaginifolia (Leadwort-leaved tobacco)).